Here is a 304-residue protein sequence, read N- to C-terminus: Glycine--tRNA ligase alpha subunit (304 aa).

The protein belongs to the class-II aminoacyl-tRNA synthetase family. In terms of assembly, tetramer of two alpha and two beta subunits.

The protein resides in the cytoplasm. The enzyme catalyses tRNA(Gly) + glycine + ATP = glycyl-tRNA(Gly) + AMP + diphosphate. In Pectobacterium atrosepticum (strain SCRI 1043 / ATCC BAA-672) (Erwinia carotovora subsp. atroseptica), this protein is Glycine--tRNA ligase alpha subunit.